Consider the following 310-residue polypeptide: Probable plastid-lipid-associated protein 2, chloroplastic (310 aa).

A chloroplast-targeting transit peptide spans Met-1–Arg-59. Residue Thr-61 is modified to Phosphothreonine. Positions Glu-65 to Leu-94 form a coiled coil.

Belongs to the PAP/fibrillin family.

It is found in the plastid. The protein localises to the chloroplast. Its subcellular location is the plastoglobule. Probably involved in light/cold stress-related jasmonate (JA) biosynthesis. The protein is Probable plastid-lipid-associated protein 2, chloroplastic (PAP2) of Arabidopsis thaliana (Mouse-ear cress).